A 181-amino-acid polypeptide reads, in one-letter code: Oligoribonuclease (181 aa).

The 164-residue stretch at 8-171 (LIWIDLEMTG…DDIRESVAEL (164 aa)) folds into the Exonuclease domain. Tyr129 is a catalytic residue.

This sequence belongs to the oligoribonuclease family.

The protein localises to the cytoplasm. 3'-to-5' exoribonuclease specific for small oligoribonucleotides. This chain is Oligoribonuclease, found in Enterobacter sp. (strain 638).